The chain runs to 663 residues: Transketolase 2 (663 aa).

Histidine 25 is a substrate binding site. Residues histidine 65 and 113–115 (GPL) each bind thiamine diphosphate. Aspartate 154 is a Mg(2+) binding site. Residues glycine 155 and asparagine 184 each contribute to the thiamine diphosphate site. Residues asparagine 184 and isoleucine 186 each contribute to the Mg(2+) site. The substrate site is built by histidine 259, arginine 356, and serine 383. Position 259 (histidine 259) interacts with thiamine diphosphate. Glutamate 410 (proton donor) is an active-site residue. Phenylalanine 436 is a thiamine diphosphate binding site. Substrate contacts are provided by histidine 460, aspartate 468, and arginine 519.

It belongs to the transketolase family. As to quaternary structure, homodimer. The cofactor is Mg(2+). It depends on Ca(2+) as a cofactor. Mn(2+) is required as a cofactor. Requires Co(2+) as cofactor. Thiamine diphosphate serves as cofactor.

It carries out the reaction D-sedoheptulose 7-phosphate + D-glyceraldehyde 3-phosphate = aldehydo-D-ribose 5-phosphate + D-xylulose 5-phosphate. Functionally, catalyzes the transfer of a two-carbon ketol group from a ketose donor to an aldose acceptor, via a covalent intermediate with the cofactor thiamine pyrophosphate. This Aliivibrio fischeri (strain ATCC 700601 / ES114) (Vibrio fischeri) protein is Transketolase 2 (tkt2).